We begin with the raw amino-acid sequence, 478 residues long: Ribosomal RNA small subunit methyltransferase F (478 aa).

S-adenosyl-L-methionine is bound by residues 121 to 127 (ASAPGSK), Glu-145, Asp-172, and Asp-190. Cys-243 serves as the catalytic Nucleophile.

It belongs to the class I-like SAM-binding methyltransferase superfamily. RsmB/NOP family.

The protein localises to the cytoplasm. It carries out the reaction cytidine(1407) in 16S rRNA + S-adenosyl-L-methionine = 5-methylcytidine(1407) in 16S rRNA + S-adenosyl-L-homocysteine + H(+). In terms of biological role, specifically methylates the cytosine at position 1407 (m5C1407) of 16S rRNA. In Shewanella woodyi (strain ATCC 51908 / MS32), this protein is Ribosomal RNA small subunit methyltransferase F.